The primary structure comprises 772 residues: Mitochondrial intermediate peptidase (772 aa).

The transit peptide at 1-37 (MLRTIILKAGSNASIPSLSRQNKLLRFFATAGAVSRT) directs the protein to the mitochondrion. His-558 provides a ligand contact to Zn(2+). Residue Glu-559 is part of the active site. Residues His-562 and His-565 each coordinate Zn(2+).

Belongs to the peptidase M3 family. Zn(2+) serves as cofactor.

The protein localises to the mitochondrion matrix. The enzyme catalyses Release of an N-terminal octapeptide as second stage of processing of some proteins imported into the mitochondrion.. Its activity is regulated as follows. Stimulated by Fe(2+). Functionally, cleaves proteins, imported into the mitochondrion, to their mature size. While most mitochondrial precursor proteins are processed to the mature form in one step by mitochondrial processing peptidase (MPP), the sequential cleavage by MIP of an octapeptide after initial processing by MPP is a required step for a subgroup of nuclear-encoded precursor proteins destined for the matrix or the inner membrane. Cleaves precursor proteins of respiratory components, including subunits of the electron transport chain and tricarboxylic acid cycle enzymes, and components of the mitochondrial genetic machinery, including ribosomal proteins, translation factors, and proteins required for mitochondrial DNA metabolism. This Saccharomyces cerevisiae (strain YJM789) (Baker's yeast) protein is Mitochondrial intermediate peptidase (OCT1).